The following is a 254-amino-acid chain: Triosephosphate isomerase (254 aa).

Substrate is bound at residue 9–11 (NWK). H98 (electrophile) is an active-site residue. The active-site Proton acceptor is the E170. Substrate-binding positions include G176, S215, and 236–237 (GG).

The protein belongs to the triosephosphate isomerase family. As to quaternary structure, homodimer.

Its subcellular location is the cytoplasm. It carries out the reaction D-glyceraldehyde 3-phosphate = dihydroxyacetone phosphate. The protein operates within carbohydrate biosynthesis; gluconeogenesis. It functions in the pathway carbohydrate degradation; glycolysis; D-glyceraldehyde 3-phosphate from glycerone phosphate: step 1/1. Functionally, involved in the gluconeogenesis. Catalyzes stereospecifically the conversion of dihydroxyacetone phosphate (DHAP) to D-glyceraldehyde-3-phosphate (G3P). The protein is Triosephosphate isomerase of Buchnera aphidicola subsp. Cinara cedri (strain Cc).